The following is a 555-amino-acid chain: Phosphoglucomutase (555 aa).

Substrate is bound by residues threonine 45, arginine 49, 148–149 (SH), and lysine 158. Catalysis depends on serine 148, which acts as the Phosphoserine intermediate. Serine 148 is a binding site for Mg(2+). Aspartate 306, aspartate 308, and aspartate 310 together coordinate Mg(2+). Substrate contacts are provided by residues 310–311 (DR) and 393–395 (EES).

The protein belongs to the phosphohexose mutase family. It depends on Mg(2+) as a cofactor.

The catalysed reaction is alpha-D-glucose 1-phosphate = alpha-D-glucose 6-phosphate. This enzyme participates in both the breakdown and synthesis of glucose. This chain is Phosphoglucomutase (celB), found in Komagataeibacter xylinus (Gluconacetobacter xylinus).